The sequence spans 102 residues: Glutaredoxin (102 aa).

Positions 3-102 (MTKTKELVSS…VPLLTEAGAV (100 aa)) constitute a Glutaredoxin domain. C23 and C26 form a disulfide bridge.

The protein belongs to the glutaredoxin family. CPYC subfamily.

It localises to the cytoplasm. In terms of biological role, has a glutathione-disulfide oxidoreductase activity in the presence of NADPH and glutathione reductase. Reduces low molecular weight disulfides and proteins. This chain is Glutaredoxin, found in Ricinus communis (Castor bean).